The following is a 145-amino-acid chain: Small ribosomal subunit protein uS19 (145 aa).

At alanine 2 the chain carries N-acetylalanine. Residue lysine 108 forms a Glycyl lysine isopeptide (Lys-Gly) (interchain with G-Cter in SUMO2) linkage.

It belongs to the universal ribosomal protein uS19 family. Component of the small ribosomal subunit.

The protein localises to the cytoplasm. In terms of biological role, component of the small ribosomal subunit. The ribosome is a large ribonucleoprotein complex responsible for the synthesis of proteins in the cell. The chain is Small ribosomal subunit protein uS19 (RPS15) from Mesocricetus auratus (Golden hamster).